Consider the following 207-residue polypeptide: dTTP/UTP pyrophosphatase (207 aa).

Aspartate 79 functions as the Proton acceptor in the catalytic mechanism.

Belongs to the Maf family. YhdE subfamily. Requires a divalent metal cation as cofactor.

Its subcellular location is the cytoplasm. The enzyme catalyses dTTP + H2O = dTMP + diphosphate + H(+). It catalyses the reaction UTP + H2O = UMP + diphosphate + H(+). In terms of biological role, nucleoside triphosphate pyrophosphatase that hydrolyzes dTTP and UTP. May have a dual role in cell division arrest and in preventing the incorporation of modified nucleotides into cellular nucleic acids. The sequence is that of dTTP/UTP pyrophosphatase from Rhodopseudomonas palustris (strain BisB5).